We begin with the raw amino-acid sequence, 229 residues long: Potassium/proton antiporter CemA (229 aa).

The next 2 membrane-spanning stretches (helical) occupy residues 114–134 (IIYF…LIIL) and 189–209 (IISG…KYWI).

Belongs to the CemA family.

The protein resides in the plastid. It localises to the chloroplast inner membrane. It catalyses the reaction K(+)(in) + H(+)(out) = K(+)(out) + H(+)(in). Its function is as follows. Contributes to K(+)/H(+) antiport activity by supporting proton efflux to control proton extrusion and homeostasis in chloroplasts in a light-dependent manner to modulate photosynthesis. Prevents excessive induction of non-photochemical quenching (NPQ) under continuous-light conditions. Indirectly promotes efficient inorganic carbon uptake into chloroplasts. The chain is Potassium/proton antiporter CemA from Lotus japonicus (Lotus corniculatus var. japonicus).